The primary structure comprises 249 residues: Isoprenyl transferase (249 aa).

Asp25 is an active-site residue. A Mg(2+)-binding site is contributed by Asp25. Substrate-binding positions include 26–29 (GNGR), Trp30, Arg38, His42, and 70–72 (STE). The active-site Proton acceptor is Asn73. Substrate contacts are provided by residues Trp74, Arg76, Arg197, and 203–205 (RLS). A Mg(2+)-binding site is contributed by Glu216.

The protein belongs to the UPP synthase family. In terms of assembly, homodimer. Mg(2+) is required as a cofactor.

In terms of biological role, catalyzes the condensation of isopentenyl diphosphate (IPP) with allylic pyrophosphates generating different type of terpenoids. In Streptococcus pyogenes serotype M6 (strain ATCC BAA-946 / MGAS10394), this protein is Isoprenyl transferase.